Consider the following 341-residue polypeptide: Beta-hexosaminidase (341 aa).

Residues aspartate 61, arginine 69, arginine 134, and 164–165 each bind substrate; that span reads KH. The active-site Proton donor/acceptor is the histidine 177. The Nucleophile role is filled by aspartate 249.

This sequence belongs to the glycosyl hydrolase 3 family. NagZ subfamily.

It is found in the cytoplasm. It catalyses the reaction Hydrolysis of terminal non-reducing N-acetyl-D-hexosamine residues in N-acetyl-beta-D-hexosaminides.. It functions in the pathway cell wall biogenesis; peptidoglycan recycling. Plays a role in peptidoglycan recycling by cleaving the terminal beta-1,4-linked N-acetylglucosamine (GlcNAc) from peptide-linked peptidoglycan fragments, giving rise to free GlcNAc, anhydro-N-acetylmuramic acid and anhydro-N-acetylmuramic acid-linked peptides. The sequence is that of Beta-hexosaminidase from Shewanella frigidimarina (strain NCIMB 400).